The sequence spans 247 residues: Transmembrane protein 33 (247 aa).

Position 2 is an N-acetylalanine (alanine 2). Residues 2–31 are Lumenal-facing; the sequence is ADTTPNGPQGAGAVQFMMTNKLDTAMWLSR. The helical transmembrane segment at 32 to 52 threads the bilayer; the sequence is LFTVYCSALFVLPLLGLHEAA. Topologically, residues 53-100 are cytoplasmic; that stretch reads SFYQRALLANALTSALRLHQRLPHFQLSRAFLAQALLEDSCHYLLYSL. Residues 101–121 form a helical membrane-spanning segment; it reads IFVNSYPVTMSIFPVLLFSLL. The Lumenal portion of the chain corresponds to 122–155; that stretch reads HAATYTKKVLDAKGSNSLPLLRSVLDKLSTNQQN. Residues 156–176 traverse the membrane as a helical segment; sequence ILKFIACNEIFLMPATVFMLF. The Cytoplasmic segment spans residues 177-247; the sequence is SGQGSLLQPF…FISRLAPTVA (71 aa).

This sequence belongs to the PER33/POM33 family. In terms of assembly, interacts with EIF2AK3. Interacts with ARL6IP1, isoform RTN1-A of RTN1, isoform RTN2-B of RTN2, isoform 3 of RTN3 and isoform 3 of RTN4. Interacts with RNF5. Interacts with RNF26. Interacts with PKD2. Highly expressed in the liver and significantly in brain, lungs and kidneys.

The protein resides in the endoplasmic reticulum membrane. It is found in the melanosome. Its subcellular location is the nucleus envelope. Its function is as follows. Acts as a regulator of the tubular endoplasmic reticulum (ER) network by modulating intracellular calcium homeostasis. Mechanistically, stimulates PKD2 calcium-dependent activity. Suppresses the RTN3/4-induced formation of the ER tubules. Positively regulates PERK-mediated and IRE1-mediated unfolded protein response signaling. Plays an essential role in VEGF-mediated release of Ca(2+) from ER stores during angiogenesis. Also plays a role in the modulation of innate immune signaling through the cGAS-STING pathway by interacting with RNF26. Participates in lipid metabolism by acting as a downstream effector of the pyruvate kinase/PKM. Forms a complex with RNF5 to facilitate polyubiquitination and subsequent degradation of SCAP on the ER membrane. This is Transmembrane protein 33 (Tmem33) from Rattus norvegicus (Rat).